A 218-amino-acid polypeptide reads, in one-letter code: Small ribosomal subunit protein uS3 (218 aa).

In terms of domain architecture, KH type-2 spans 43–113; the sequence is IREHIERKLA…KVQVNVREVS (71 aa).

Belongs to the universal ribosomal protein uS3 family. Part of the 30S ribosomal subunit. Forms a tight complex with proteins S10 and S14.

Its function is as follows. Binds the lower part of the 30S subunit head. Binds mRNA in the 70S ribosome, positioning it for translation. The sequence is that of Small ribosomal subunit protein uS3 from Rubrobacter xylanophilus (strain DSM 9941 / JCM 11954 / NBRC 16129 / PRD-1).